Consider the following 276-residue polypeptide: Zinc transporter ZTP29 (276 aa).

At 1–6 the chain is on the cytoplasmic side; sequence MDSQML. A helical transmembrane segment spans residues 7–27; sequence VALGLSLVGGLSTSLGALFVV. Over 28-35 the chain is Lumenal; the sequence is LSETPNMK. The helical transmembrane segment at 36-56 threads the bilayer; it reads MLGLLQGFASGLMLSISFLDL. The Cytoplasmic portion of the chain corresponds to 57–63; that stretch reads AHNAINS. Residues 64–84 traverse the membrane as a helical segment; it reads IGFFKANLWFFGGVIFFACIT. Over 85–123 the chain is Lumenal; that stretch reads KFIPEPTLGPSTDGKRRKKNGDEGGKDMMKKHRKQVLYS. The chain crosses the membrane as a helical span at residues 124–144; that stretch reads GLITAIGISLHNFPEGMAVFL. Topologically, residues 145-156 are cytoplasmic; the sequence is GSIKGMRVGVNL. The helical transmembrane segment at 157–177 threads the bilayer; it reads ALAIALHNIPEGVAVALPIYF. Residues 178–187 are Lumenal-facing; sequence ATESKWQAFK. A helical membrane pass occupies residues 188-208; sequence LATLSGLAEPLGVIIVAYLFP. The Cytoplasmic segment spans residues 209-219; the sequence is RSLSPEILEGL. A helical transmembrane segment spans residues 220 to 240; sequence LGAVGGIMAFLTLHEMLPLAF. Residues 241 to 250 are Lumenal-facing; it reads DYAGQKQAVK. The helical transmembrane segment at 251 to 271 threads the bilayer; that stretch reads AVFFGMACMSASLYFLELSLP. Topologically, residues 272 to 276 are cytoplasmic; the sequence is ETMSL.

It belongs to the ZIP transporter (TC 2.A.5) family. ZupT subfamily. In terms of tissue distribution, expressed in hypocotyls, cotyledons, leaves and anthers.

It localises to the endoplasmic reticulum membrane. Functionally, zinc transporter involved response to salt stress. May act through the regulation of zinc levels required to induce the unfolded protein response (UPR) pathway. The polypeptide is Zinc transporter ZTP29 (ZTP29) (Arabidopsis thaliana (Mouse-ear cress)).